A 411-amino-acid polypeptide reads, in one-letter code: Glutamate dehydrogenase 1 (411 aa).

Residue Lys102 is part of the active site.

This sequence belongs to the Glu/Leu/Phe/Val dehydrogenases family.

It catalyses the reaction L-glutamate + NAD(+) + H2O = 2-oxoglutarate + NH4(+) + NADH + H(+). The enzyme catalyses L-glutamate + NADP(+) + H2O = 2-oxoglutarate + NH4(+) + NADPH + H(+). The sequence is that of Glutamate dehydrogenase 1 (GDH1) from Arabidopsis thaliana (Mouse-ear cress).